The primary structure comprises 874 residues: Alanine--tRNA ligase (874 aa).

Zn(2+) contacts are provided by H564, H568, C665, and H669.

It belongs to the class-II aminoacyl-tRNA synthetase family. Requires Zn(2+) as cofactor.

Its subcellular location is the cytoplasm. The enzyme catalyses tRNA(Ala) + L-alanine + ATP = L-alanyl-tRNA(Ala) + AMP + diphosphate. Catalyzes the attachment of alanine to tRNA(Ala) in a two-step reaction: alanine is first activated by ATP to form Ala-AMP and then transferred to the acceptor end of tRNA(Ala). Also edits incorrectly charged Ser-tRNA(Ala) and Gly-tRNA(Ala) via its editing domain. The sequence is that of Alanine--tRNA ligase from Burkholderia thailandensis (strain ATCC 700388 / DSM 13276 / CCUG 48851 / CIP 106301 / E264).